The chain runs to 312 residues: DNA primase small subunit PriS (312 aa).

Active-site residues include aspartate 88, aspartate 90, and aspartate 215.

Belongs to the eukaryotic-type primase small subunit family. Heterodimer of a small subunit (PriS) and a large subunit (PriL). Requires Mg(2+) as cofactor. Mn(2+) serves as cofactor.

Catalytic subunit of DNA primase, an RNA polymerase that catalyzes the synthesis of short RNA molecules used as primers for DNA polymerase during DNA replication. The small subunit contains the primase catalytic core and has DNA synthesis activity on its own. Binding to the large subunit stabilizes and modulates the activity, increasing the rate of DNA synthesis while decreasing the length of the DNA fragments, and conferring RNA synthesis capability. The DNA polymerase activity may enable DNA primase to also catalyze primer extension after primer synthesis. May also play a role in DNA repair. This Pyrobaculum aerophilum (strain ATCC 51768 / DSM 7523 / JCM 9630 / CIP 104966 / NBRC 100827 / IM2) protein is DNA primase small subunit PriS.